The following is an 89-amino-acid chain: Small ribosomal subunit protein uS15 (89 aa).

This sequence belongs to the universal ribosomal protein uS15 family. In terms of assembly, part of the 30S ribosomal subunit. Forms a bridge to the 50S subunit in the 70S ribosome, contacting the 23S rRNA.

Its function is as follows. One of the primary rRNA binding proteins, it binds directly to 16S rRNA where it helps nucleate assembly of the platform of the 30S subunit by binding and bridging several RNA helices of the 16S rRNA. Forms an intersubunit bridge (bridge B4) with the 23S rRNA of the 50S subunit in the ribosome. This chain is Small ribosomal subunit protein uS15, found in Shewanella denitrificans (strain OS217 / ATCC BAA-1090 / DSM 15013).